We begin with the raw amino-acid sequence, 197 residues long: ATP-dependent Clp protease proteolytic subunit (197 aa).

Catalysis depends on S98, which acts as the Nucleophile. Residue H123 is part of the active site.

This sequence belongs to the peptidase S14 family. Fourteen ClpP subunits assemble into 2 heptameric rings which stack back to back to give a disk-like structure with a central cavity, resembling the structure of eukaryotic proteasomes.

It localises to the cytoplasm. It carries out the reaction Hydrolysis of proteins to small peptides in the presence of ATP and magnesium. alpha-casein is the usual test substrate. In the absence of ATP, only oligopeptides shorter than five residues are hydrolyzed (such as succinyl-Leu-Tyr-|-NHMec, and Leu-Tyr-Leu-|-Tyr-Trp, in which cleavage of the -Tyr-|-Leu- and -Tyr-|-Trp bonds also occurs).. Cleaves peptides in various proteins in a process that requires ATP hydrolysis. Has a chymotrypsin-like activity. Plays a major role in the degradation of misfolded proteins. The chain is ATP-dependent Clp protease proteolytic subunit from Enterococcus faecalis (strain ATCC 700802 / V583).